Reading from the N-terminus, the 402-residue chain is uncharacterized protein (402 aa).

A run of 11 helical transmembrane segments spans residues 12–32, 48–68, 80–100, 101–121, 134–154, 168–188, 212–232, 248–268, 291–311, 339–359, and 367–387; these read FWLI…ITSV, GAAG…SPLA, TLWL…TGYT, AALF…NVLL, GIMI…ASGV, QAFL…IPQL, WYVT…IAWF, WMVS…PVLA, GLLA…IGIG, MSQS…GYLF, and MPIV…QGAG.

Belongs to the major facilitator superfamily. Cyanate porter (TC 2.A.1.17) family.

It is found in the cell membrane. This is an uncharacterized protein from Bacillus subtilis (strain 168).